The sequence spans 518 residues: MDTMSNSQQNKGIGRKVQAFGSFLSSMIMPNIGAFIAWGFIAAIFIDNGWFPNKDLAQLAGPMITYLIPLLIAFSGGRLIHDLRGGIIAATATMGVIVALPDTPMLLGAMIMGPLVGWLMKKTDEFVQPRTPQGFEMLFNNFSAGILGFIMTIFGFEVLAPIMKFIMHILSVGVEALVHAHLLPLVSILVEPAKIVFLNNAINHGVFTPLGADQAAHAGQSILYTIESNPGPGIGVLIAYMIFGKGTAKATSYGAGIIQFFGGIHEIYFPYVLMRPLLFVSVILGGMTGVATYSLLDFGFKTPASPGSIIVYAINAPKGEFLHMLTGVVLAALVSFVVSALILKFTKDPKQDLAEATAQMEATKGKKSSVASKLSAKDDNKAADNKTAETTTATAASNKAEDKDSDELLDDYNTEDVDAHNYNNVDHVIFACDAGMGSSAMGASMLRNKFKNAGLENIQVTNTAINQLPKNAQLVITQKKLTDRAIKQSPDAIHISVENFLNSPRYEELINNLKEDQD.

Residues 1-31 (MDTMSNSQQNKGIGRKVQAFGSFLSSMIMPN) lie on the Cytoplasmic side of the membrane. The 333-residue stretch at 20-352 (FGSFLSSMIM…LKFTKDPKQD (333 aa)) folds into the PTS EIIC type-2 domain. A helical transmembrane segment spans residues 32 to 53 (IGAFIAWGFIAAIFIDNGWFPN). The Extracellular segment spans residues 54–57 (KDLA). Residues 58-78 (QLAGPMITYLIPLLIAFSGGR) traverse the membrane as a helical segment. At 79-142 (LIHDLRGGII…QGFEMLFNNF (64 aa)) the chain is on the cytoplasmic side. Residues 143-164 (SAGILGFIMTIFGFEVLAPIMK) traverse the membrane as a helical segment. The Extracellular portion of the chain corresponds to 165 to 173 (FIMHILSVG). A helical membrane pass occupies residues 174-194 (VEALVHAHLLPLVSILVEPAK). Residues 195–281 (IVFLNNAINH…VLMRPLLFVS (87 aa)) lie on the Cytoplasmic side of the membrane. The chain crosses the membrane as a helical span at residues 282 to 301 (VILGGMTGVATYSLLDFGFK). The Extracellular segment spans residues 302–321 (TPASPGSIIVYAINAPKGEF). A helical membrane pass occupies residues 322–343 (LHMLTGVVLAALVSFVVSALIL). The Cytoplasmic portion of the chain corresponds to 344–518 (KFTKDPKQDL…LINNLKEDQD (175 aa)). Positions 369-406 (SVASKLSAKDDNKAADNKTAETTTATAASNKAEDKDSD) are disordered. Residues 375-387 (SAKDDNKAADNKT) show a composition bias toward basic and acidic residues. The span at 388 to 398 (AETTTATAASN) shows a compositional bias: low complexity. The PTS EIIB type-2 domain occupies 426 to 518 (DHVIFACDAG…LINNLKEDQD (93 aa)). Residue Cys432 is the Phosphocysteine intermediate of the active site. A Phosphocysteine; by EIIA modification is found at Cys432.

Homodimer.

The protein localises to the cell membrane. The catalysed reaction is D-mannitol(out) + N(pros)-phospho-L-histidyl-[protein] = D-mannitol 1-phosphate(in) + L-histidyl-[protein]. The phosphoenolpyruvate-dependent sugar phosphotransferase system (sugar PTS), a major carbohydrate active transport system, catalyzes the phosphorylation of incoming sugar substrates concomitantly with their translocation across the cell membrane. The enzyme II CmtAB PTS system is involved in D-mannitol transport. The polypeptide is PTS system mannitol-specific EIICB component (Staphylococcus carnosus).